A 621-amino-acid chain; its full sequence is UvrABC system protein C (621 aa).

The GIY-YIG domain maps to 13–92; the sequence is EKPGVYMMRN…IKENRPKYNV (80 aa). The UVR domain maps to 205 to 240; the sequence is DELVRKIEEKMKAAAISMDFENAARYRDQIIALNNI.

It belongs to the UvrC family. Interacts with UvrB in an incision complex.

Its subcellular location is the cytoplasm. The UvrABC repair system catalyzes the recognition and processing of DNA lesions. UvrC both incises the 5' and 3' sides of the lesion. The N-terminal half is responsible for the 3' incision and the C-terminal half is responsible for the 5' incision. This Alkaliphilus oremlandii (strain OhILAs) (Clostridium oremlandii (strain OhILAs)) protein is UvrABC system protein C.